Reading from the N-terminus, the 699-residue chain is D-(-)-3-hydroxybutyrate oligomer hydrolase (699 aa).

An N-terminal signal peptide occupies residues 1 to 33 (MTAIRGGSRRAPGLALALLGGVLLGACHGDENA). S311 (charge relay system) is an active-site residue.

Belongs to the D-(-)-3-hydroxybutyrate oligomer hydrolase family.

Its subcellular location is the secreted. It catalyses the reaction (3R)-hydroxybutanoate dimer + H2O = 2 (R)-3-hydroxybutanoate + H(+). The protein operates within lipid metabolism; butanoate metabolism. In terms of biological role, participates in the degradation of poly-3-hydroxybutyrate (PHB). It works downstream of poly(3-hydroxybutyrate) depolymerase, hydrolyzing D(-)-3-hydroxybutyrate oligomers of various length (3HB-oligomers) into 3HB-monomers. This Burkholderia pseudomallei (strain 1710b) protein is D-(-)-3-hydroxybutyrate oligomer hydrolase.